The primary structure comprises 180 residues: Bifunctional protein PyrR (180 aa).

The short motif at 101–113 (VILVDDVLYTGRT) is the PRPP-binding element.

This sequence belongs to the purine/pyrimidine phosphoribosyltransferase family. PyrR subfamily. Homodimer and homohexamer; in equilibrium.

It carries out the reaction UMP + diphosphate = 5-phospho-alpha-D-ribose 1-diphosphate + uracil. Regulates transcriptional attenuation of the pyrimidine nucleotide (pyr) operon by binding in a uridine-dependent manner to specific sites on pyr mRNA. This disrupts an antiterminator hairpin in the RNA and favors formation of a downstream transcription terminator, leading to a reduced expression of downstream genes. In terms of biological role, also displays a weak uracil phosphoribosyltransferase activity which is not physiologically significant. This is Bifunctional protein PyrR from Bacillus cereus (strain ATCC 14579 / DSM 31 / CCUG 7414 / JCM 2152 / NBRC 15305 / NCIMB 9373 / NCTC 2599 / NRRL B-3711).